The following is a 421-amino-acid chain: Actin-related protein 6 (421 aa).

This sequence belongs to the actin family. ARP6 subfamily. In terms of assembly, component of the SWR1 chromatin-remodeling complex composed of at least ARP6/ESD1/SUF3, PIE1, SWC6, SWC2 and H2AZs (HTA8, HTA9, HTA11). Interacts directly with SWC6/SEF and PIE1. Also interacts with H2A.F/Z proteins. In terms of tissue distribution, mostly expressed in flowers, and, to a lower extent, in seedlings, shoot apex, stems, siliques, seeds, and roots (at protein level).

The protein localises to the nucleus. It localises to the cytoplasm. Functionally, component of the SWR1 complex which mediates the ATP-dependent exchange of histone H2A for the H2A variant H2A.F/Z leading to transcriptional regulation of selected genes (e.g. FLC) by chromatin remodeling. Binds to the promoter region of FLC chromatin. Required for the activation of FLC and FLC/MAF genes expression to levels that inhibit flowering, through both histone H3 and H4 acetylation and methylation mechanisms. Involved in several developmental processes including organization of plant organs, leaves formation, flowering time repression, and fertility. Modulates photoperiod-dependent epidermal leaves cell development; promotes cell division in long days, and cell expansion/division in short days. May be involved in the regulation of pathogenesis-related proteins (PRs). This Arabidopsis thaliana (Mouse-ear cress) protein is Actin-related protein 6 (ARP6).